We begin with the raw amino-acid sequence, 151 residues long: Large ribosomal subunit protein uL13 (151 aa).

Belongs to the universal ribosomal protein uL13 family. In terms of assembly, part of the 50S ribosomal subunit.

Functionally, this protein is one of the early assembly proteins of the 50S ribosomal subunit, although it is not seen to bind rRNA by itself. It is important during the early stages of 50S assembly. In Mycoplasma mycoides subsp. mycoides SC (strain CCUG 32753 / NCTC 10114 / PG1), this protein is Large ribosomal subunit protein uL13.